The sequence spans 70 residues: uncharacterized protein (70 aa).

A helical transmembrane segment spans residues 15–37; that stretch reads LLVSSISESAVALIIITIRILFS.

The protein localises to the membrane. This is an uncharacterized protein from Saccharomyces cerevisiae (strain ATCC 204508 / S288c) (Baker's yeast).